The primary structure comprises 539 residues: CTP synthase (539 aa).

An amidoligase domain region spans residues 1 to 267; the sequence is MTKYIFVTGG…DQKVVDFLHI (267 aa). S13 provides a ligand contact to CTP. S13 is a UTP binding site. Residue 14–19 participates in ATP binding; sequence SLGKGI. Y54 is an L-glutamine binding site. D71 is a binding site for ATP. 2 residues coordinate Mg(2+): D71 and E141. Residues 148–150, 188–193, and K224 each bind CTP; these read DME and KSKPTQ. Residues 188–193 and K224 contribute to the UTP site; that span reads KSKPTQ. One can recognise a Glutamine amidotransferase type-1 domain in the interval 294-537; sequence KITLVGKYVE…IGAASGLQVD (244 aa). G356 provides a ligand contact to L-glutamine. Catalysis depends on C383, which acts as the Nucleophile; for glutamine hydrolysis. L-glutamine-binding positions include 384-387, E407, and R465; that span reads LGMQ. Active-site residues include H510 and E512.

It belongs to the CTP synthase family. In terms of assembly, homotetramer.

It carries out the reaction UTP + L-glutamine + ATP + H2O = CTP + L-glutamate + ADP + phosphate + 2 H(+). The catalysed reaction is L-glutamine + H2O = L-glutamate + NH4(+). The enzyme catalyses UTP + NH4(+) + ATP = CTP + ADP + phosphate + 2 H(+). It participates in pyrimidine metabolism; CTP biosynthesis via de novo pathway; CTP from UDP: step 2/2. Allosterically activated by GTP, when glutamine is the substrate; GTP has no effect on the reaction when ammonia is the substrate. The allosteric effector GTP functions by stabilizing the protein conformation that binds the tetrahedral intermediate(s) formed during glutamine hydrolysis. Inhibited by the product CTP, via allosteric rather than competitive inhibition. Functionally, catalyzes the ATP-dependent amination of UTP to CTP with either L-glutamine or ammonia as the source of nitrogen. Regulates intracellular CTP levels through interactions with the four ribonucleotide triphosphates. The polypeptide is CTP synthase (Lactobacillus delbrueckii subsp. bulgaricus (strain ATCC BAA-365 / Lb-18)).